Reading from the N-terminus, the 354-residue chain is Fructose-bisphosphate aldolase (354 aa).

Ser50 contacts D-glyceraldehyde 3-phosphate. Asp83 functions as the Proton donor in the catalytic mechanism. Residues His84, Asp105, Glu142, and His198 each contribute to the Zn(2+) site. A dihydroxyacetone phosphate-binding site is contributed by Gly199. His232 contributes to the Zn(2+) binding site. Residues 233–235 (GSS) and 275–278 (NIDT) contribute to the dihydroxyacetone phosphate site.

It belongs to the class II fructose-bisphosphate aldolase family. Homodimer. It depends on Zn(2+) as a cofactor.

The catalysed reaction is beta-D-fructose 1,6-bisphosphate = D-glyceraldehyde 3-phosphate + dihydroxyacetone phosphate. The protein operates within carbohydrate biosynthesis; Calvin cycle. It participates in carbohydrate degradation; glycolysis; D-glyceraldehyde 3-phosphate and glycerone phosphate from D-glucose: step 4/4. Its activity is regulated as follows. Activity is stimulated by Fe(2+) in autotrophically grown cells. Functionally, catalyzes the aldol condensation of dihydroxyacetone phosphate (DHAP or glycerone-phosphate) with glyceraldehyde 3-phosphate (G3P) to form fructose 1,6-bisphosphate (FBP) in gluconeogenesis and the reverse reaction in glycolysis. This is Fructose-bisphosphate aldolase from Xanthobacter flavus.